A 396-amino-acid polypeptide reads, in one-letter code: S-adenosylmethionine synthase 4 (396 aa).

Glutamate 12 is a binding site for Mg(2+). Histidine 18 is an ATP binding site. K(+) is bound at residue glutamate 46. Residues glutamate 59 and glutamine 102 each coordinate L-methionine. Residues 170 to 172 (DGK), 238 to 241 (SGRF), aspartate 249, 255 to 256 (RK), alanine 272, lysine 276, and lysine 280 contribute to the ATP site. Aspartate 249 contacts L-methionine. Lysine 280 contributes to the L-methionine binding site.

Belongs to the AdoMet synthase family. Homotetramer. Mn(2+) serves as cofactor. It depends on Mg(2+) as a cofactor. Requires Co(2+) as cofactor. K(+) is required as a cofactor.

The protein localises to the cytoplasm. It catalyses the reaction L-methionine + ATP + H2O = S-adenosyl-L-methionine + phosphate + diphosphate. It participates in amino-acid biosynthesis; S-adenosyl-L-methionine biosynthesis; S-adenosyl-L-methionine from L-methionine: step 1/1. In terms of biological role, catalyzes the formation of S-adenosylmethionine from methionine and ATP. The reaction comprises two steps that are both catalyzed by the same enzyme: formation of S-adenosylmethionine (AdoMet) and triphosphate, and subsequent hydrolysis of the triphosphate. This chain is S-adenosylmethionine synthase 4 (SAM4), found in Hordeum vulgare (Barley).